The sequence spans 394 residues: 1-deoxy-D-xylulose 5-phosphate reductoisomerase (394 aa).

Thr-14, Gly-15, Ser-16, Ile-17, Gly-40, and Asn-128 together coordinate NADPH. Lys-129 serves as a coordination point for 1-deoxy-D-xylulose 5-phosphate. Glu-130 provides a ligand contact to NADPH. Asp-154 provides a ligand contact to Mn(2+). 1-deoxy-D-xylulose 5-phosphate is bound by residues Ser-155, Glu-156, Ser-180, and His-203. Glu-156 contributes to the Mn(2+) binding site. Gly-209 contacts NADPH. 1-deoxy-D-xylulose 5-phosphate is bound by residues Ser-216, Asn-221, Lys-222, and Glu-225. Position 225 (Glu-225) interacts with Mn(2+).

The protein belongs to the DXR family. It depends on Mg(2+) as a cofactor. Requires Mn(2+) as cofactor.

The catalysed reaction is 2-C-methyl-D-erythritol 4-phosphate + NADP(+) = 1-deoxy-D-xylulose 5-phosphate + NADPH + H(+). It participates in isoprenoid biosynthesis; isopentenyl diphosphate biosynthesis via DXP pathway; isopentenyl diphosphate from 1-deoxy-D-xylulose 5-phosphate: step 1/6. Functionally, catalyzes the NADPH-dependent rearrangement and reduction of 1-deoxy-D-xylulose-5-phosphate (DXP) to 2-C-methyl-D-erythritol 4-phosphate (MEP). In Xylella fastidiosa (strain M12), this protein is 1-deoxy-D-xylulose 5-phosphate reductoisomerase.